Reading from the N-terminus, the 359-residue chain is tRNA-specific 2-thiouridylase MnmA (359 aa).

Residues 9 to 16 and methionine 35 each bind ATP; that span reads GISGGVDS. The tract at residues 95–97 is interaction with target base in tRNA; the sequence is NPD. The active-site Nucleophile is the cysteine 100. Cysteines 100 and 197 form a disulfide. ATP is bound at residue glycine 124. The interaction with tRNA stretch occupies residues 147 to 149; the sequence is KDQ. Residue cysteine 197 is the Cysteine persulfide intermediate of the active site. The segment at 309 to 310 is interaction with tRNA; it reads RY.

This sequence belongs to the MnmA/TRMU family.

Its subcellular location is the cytoplasm. The enzyme catalyses S-sulfanyl-L-cysteinyl-[protein] + uridine(34) in tRNA + AH2 + ATP = 2-thiouridine(34) in tRNA + L-cysteinyl-[protein] + A + AMP + diphosphate + H(+). Catalyzes the 2-thiolation of uridine at the wobble position (U34) of tRNA, leading to the formation of s(2)U34. This Francisella tularensis subsp. novicida (strain U112) protein is tRNA-specific 2-thiouridylase MnmA.